We begin with the raw amino-acid sequence, 484 residues long: Glutamate--tRNA ligase (484 aa).

The short motif at 12-22 (PSPTGEPHVGT) is the 'HIGH' region element. The short motif at 253 to 257 (KLSKR) is the 'KMSKS' region element. K256 is an ATP binding site.

This sequence belongs to the class-I aminoacyl-tRNA synthetase family. Glutamate--tRNA ligase type 1 subfamily. Monomer.

Its subcellular location is the cytoplasm. It carries out the reaction tRNA(Glu) + L-glutamate + ATP = L-glutamyl-tRNA(Glu) + AMP + diphosphate. Its function is as follows. Catalyzes the attachment of glutamate to tRNA(Glu) in a two-step reaction: glutamate is first activated by ATP to form Glu-AMP and then transferred to the acceptor end of tRNA(Glu). The protein is Glutamate--tRNA ligase of Rhizobium etli (strain CIAT 652).